The following is a 446-amino-acid chain: Telomere-binding protein 51 kDa subunit (446 aa).

Belongs to the telombin family. In terms of assembly, monomer.

The protein localises to the nucleus. It is found in the chromosome. It localises to the telomere. May function as protective capping of the single-stranded telomeric overhang. May also participate in telomere length regulation during DNA replication. Binds specifically to the T4G4-containing extension on the 3'strand and protects this region of the telomere from nuclease digestion and chemical modification. The sequence is that of Telomere-binding protein 51 kDa subunit from Euplotes crassus.